The primary structure comprises 465 residues: MKGIISQVMGPVVDVDFKDYLPKINEAIEVKYDVEGIQKRLVLEVAAHLGDNKVRTIAMDMSDGLRRGLEAEALGAPISVPVGKKVLGRIFNVTGDLIDEGEPEDFETRWSIHRDPPSFEDQSTKSEIFETGIKVVDLLAPYAKGGKVGLFGGAGVGKTVIIMELIHNVAFKHNGYSVFAGVGERTREGNDLYNEMKESGVLDKVALTYGQMNEPPGARNRIALTGLTMAEYFRDELGLDVLMFIDNIFRFSQSGSEMSALLGRIPSAVGYQPTLASEMGKLQERITSTKKGSITSVQAVYVPADDLTDPAPATVFAHLDATTVLNRSIAEKGIYPAVDPLNSTSRMLDPQIVGEEHYKIARGVQAVLQKYKDLQDIIAILGMDELSEEDKLVVERARKIEKYLSQPFFVAEVFTGSPGKYISLEDTIAGFKGILEGKYDDLPENAFYMVGSIDEVLAKAEKMKA.

152–159 (GGAGVGKT) contacts ATP.

The protein belongs to the ATPase alpha/beta chains family. As to quaternary structure, F-type ATPases have 2 components, CF(1) - the catalytic core - and CF(0) - the membrane proton channel. CF(1) has five subunits: alpha(3), beta(3), gamma(1), delta(1), epsilon(1). CF(0) has three main subunits: a(1), b(2) and c(9-12). The alpha and beta chains form an alternating ring which encloses part of the gamma chain. CF(1) is attached to CF(0) by a central stalk formed by the gamma and epsilon chains, while a peripheral stalk is formed by the delta and b chains.

It localises to the cell inner membrane. It carries out the reaction ATP + H2O + 4 H(+)(in) = ADP + phosphate + 5 H(+)(out). In terms of biological role, produces ATP from ADP in the presence of a proton gradient across the membrane. The catalytic sites are hosted primarily by the beta subunits. The sequence is that of ATP synthase subunit beta from Campylobacter hominis (strain ATCC BAA-381 / DSM 21671 / CCUG 45161 / LMG 19568 / NCTC 13146 / CH001A).